A 305-amino-acid polypeptide reads, in one-letter code: Tyrosine recombinase XerD (305 aa).

A Core-binding (CB) domain is found at methionine 1–isoleucine 83. One can recognise a Tyr recombinase domain in the interval lysine 104–leucine 298. Residues arginine 145, lysine 175, histidine 250, arginine 253, and histidine 276 contribute to the active site. The O-(3'-phospho-DNA)-tyrosine intermediate role is filled by tyrosine 285.

Belongs to the 'phage' integrase family. XerD subfamily. As to quaternary structure, forms a cyclic heterotetrameric complex composed of two molecules of XerC and two molecules of XerD.

It is found in the cytoplasm. Site-specific tyrosine recombinase, which acts by catalyzing the cutting and rejoining of the recombining DNA molecules. The XerC-XerD complex is essential to convert dimers of the bacterial chromosome into monomers to permit their segregation at cell division. It also contributes to the segregational stability of plasmids. The sequence is that of Tyrosine recombinase XerD from Rickettsia bellii (strain RML369-C).